We begin with the raw amino-acid sequence, 181 residues long: Large ribosomal subunit protein uL5c (181 aa).

The protein belongs to the universal ribosomal protein uL5 family. As to quaternary structure, part of the 50S ribosomal subunit; contacts the 5S rRNA.

The protein resides in the plastid. It is found in the chloroplast. In terms of biological role, binds 5S rRNA, forms part of the central protuberance of the 50S subunit. The protein is Large ribosomal subunit protein uL5c (rpl5) of Heterosigma akashiwo (strain NIES-293 / 8280G21-1).